Consider the following 82-residue polypeptide: uncharacterized protein (82 aa).

The next 2 membrane-spanning stretches (helical) occupy residues 22-39 (WASD…MFIA) and 46-65 (LKMG…TWVI).

Its subcellular location is the cell membrane. This is an uncharacterized protein from Bacillus subtilis (strain 168).